A 1014-amino-acid chain; its full sequence is Resistance to glucose repression protein 1 (1014 aa).

The disordered stretch occupies residues 1-63; the sequence is MSTNLANYFA…AVQAKNDDDF (63 aa). Serine 2 is modified (N-acetylserine). Over residues 11 to 34 the composition is skewed to basic and acidic residues; sequence GKKDIENEHVNRNASHESNSKSDV. Threonine 73 is subject to Phosphothreonine. Serine 75 carries the phosphoserine modification. 2 disordered regions span residues 90–144 and 236–270; these read LGRS…YLIP and SEGNAQSEEEHDLERGYGSDDENSKRISMPTKNSK. A compositionally biased stretch (low complexity) spans 104 to 115; sequence YDNSSNNSSSNS. Serine 242 and serine 254 each carry phosphoserine. Over residues 247–260 the composition is skewed to basic and acidic residues; that stretch reads DLERGYGSDDENSK. The Nuclear localization signal motif lies at 277–283; the sequence is KPILKKR. Serine 311 carries the phosphoserine modification. Residues 340–463 form a disordered region; that stretch reads YPKESNSSVS…SEKSNKPTKN (124 aa). Polar residues-rich tracts occupy residues 343 to 352, 361 to 370, 389 to 407, and 415 to 455; these read ESNSSVSLKS, STIPNPVGEN, HVQNNRSTAQSNKSILENS, and LDQN…NPSE. Residue serine 421 is modified to Phosphoserine. Tyrosine 480 carries the post-translational modification Phosphotyrosine. Serine 490 is subject to Phosphoserine. Disordered stretches follow at residues 531–557 and 570–591; these read EHLNKNTSDDDTSSQSSSSSHSDDEEH and SDSGVHSPITDNSSVASSTTSR. 3 positions are modified to phosphoserine: serine 570, serine 572, and serine 576. Polar residues predominate over residues 578–591; it reads ITDNSSVASSTTSR. A Nuclear localization signal motif is present at residues 595–599; it reads RPIIK. Serine 610, serine 614, and serine 680 each carry phosphoserine. Residues 690-897 are disordered; that stretch reads SKEKHVPQLH…QSFRIVNNTP (208 aa). A compositionally biased stretch (low complexity) spans 722 to 740; the sequence is YSSSSDSEQQFIEDSQYNS. Residues 741-758 are compositionally biased toward acidic residues; sequence SDDEEEEDDDDQEVDDNH. Composition is skewed to polar residues over residues 770 to 802 and 822 to 833; these read LGKSGSTNSLYDLAQPSLSSATPQQKNPTNFTG and RNSSSGNFIFNS. The Nuclear localization signal signature appears at 873–879; sequence KKKALPK. Residues 884-897 show a composition bias toward polar residues; it reads SDSSQSFRIVNNTP. Threonine 896 is subject to Phosphothreonine. Serine 898 is modified (phosphoserine). The segment covering 959–972 has biased composition (basic and acidic residues); sequence KKVDSVQTTRKEAS. The tract at residues 959–982 is disordered; the sequence is KKVDSVQTTRKEASLTDSSNESLH. Serine 980 is subject to Phosphoserine.

As to quaternary structure, interacts with SAK1.

Its subcellular location is the nucleus. Involved in RNA processing and negative regulation of glucose repression. Regulates the level of two antigens, P43 and P70. Binds to protein phosphatase type 1. Functions with REG2 and SNF1 protein kinase to regulate growth. Might regulate SNF1 directly or indirectly. In Saccharomyces cerevisiae (strain ATCC 204508 / S288c) (Baker's yeast), this protein is Resistance to glucose repression protein 1 (REG1).